A 169-amino-acid chain; its full sequence is MEVHMLSKDNKKSIRKTLEQRRGEYAYYVIKEVADLNDKQLEEKYASLVKKAPVMILSNGLLQTLAFLLAKAETSPEKANQILSRVNEYPPRFIEKLGNDKDEHLLLYLHIVYWLRENVDRNIDVKTLLSQDYSKVLWATKEAIALLNWMRRFAVAMLKEEGKENEGSS.

The protein belongs to the CRISPR system Cmr5 family. As to quaternary structure, monomer in isolation. Part of the type III-B Cmr ribonucleoprotein (RNP) complex, an elongated RNP with Cmr2 and Cmr3 as the base, with Cmr4 and Cmr5 forming a helical core along the mature crRNA (39 or 45 nt in length), while the complex is capped by Cmr6 and Cmr1. The 5' end of the crRNA is bound to Cmr2 and Cmr3, while Cmr6 and a Cmr1 subunit (Cmr1-1 or Cmr1-2) cap the 3' end of the crRNA. The target RNA lies antiparallel to the crRNA, with its 5' end near Cmr1 and Cmr6 and its 3' end near Cmr2 and Cmr3; major target cleavage occurs nears the junction of Cmr1/Cmr6 and Cmr4/Cmr, with minor cleavage occurring at 6 nt intervals which coincide with the proposed spacing of Cmr4 subunits. Interacts with Cmr4. Interacts with Cmr2, Cmr4 and Cmr6.

It localises to the cytoplasm. CRISPR (clustered regularly interspaced short palindromic repeat), is an adaptive immune system that provides protection against mobile genetic elements (viruses, transposable elements and conjugative plasmids). CRISPR clusters contain sequences complementary to antecedent mobile elements and target invading nucleic acids. CRISPR clusters are transcribed and processed into CRISPR RNA (crRNA), formerly called psiRNA (prokaryotic silencing) in this organism. Part of the Cmr ribonucleoprotein complex which has divalent cation-dependent endoribonuclease activity specific for ssRNA complementary to the crRNA (target NRA), generating 5' hydroxy- and 3' phosphate or 2'-3' cyclic phosphate termini. Cmr4 is probably the subunit that cleaves target RNA. Cmr complex does not cleave ssDNA complementary to the crRNA. Cleavage of invading RNA is guided by the crRNA; substrate cleavage occurs a fixed distance (14 nt) from the 3' end of the crRNA. In vitro reconstitution shows Cmr1-2 and Cmr5 are not absolutely necessary for target cleavage. The protein is CRISPR system Cmr subunit Cmr5 of Pyrococcus furiosus (strain ATCC 43587 / DSM 3638 / JCM 8422 / Vc1).